Here is a 290-residue protein sequence, read N- to C-terminus: Oxaloacetate decarboxylase 2 (290 aa).

Residue Ser-50 participates in substrate binding. Asp-88 provides a ligand contact to Mg(2+). Positions 159 and 235 each coordinate substrate.

This sequence belongs to the isocitrate lyase/PEP mutase superfamily. Oxaloacetate decarboxylase family. In terms of assembly, homotetramer; dimer of dimers. Requires Mg(2+) as cofactor.

The catalysed reaction is oxaloacetate + H(+) = pyruvate + CO2. Its function is as follows. Catalyzes the decarboxylation of oxaloacetate into pyruvate. Seems to play a role in maintaining cellular concentrations of bicarbonate and pyruvate. The protein is Oxaloacetate decarboxylase 2 of Pseudomonas fluorescens (strain Pf0-1).